Reading from the N-terminus, the 281-residue chain is 4-diphosphocytidyl-2-C-methyl-D-erythritol kinase (281 aa).

The active site involves lysine 11. 92–102 (LVSAGLAGGSA) provides a ligand contact to ATP. Residue aspartate 132 is part of the active site.

The protein belongs to the GHMP kinase family. IspE subfamily.

The enzyme catalyses 4-CDP-2-C-methyl-D-erythritol + ATP = 4-CDP-2-C-methyl-D-erythritol 2-phosphate + ADP + H(+). The protein operates within isoprenoid biosynthesis; isopentenyl diphosphate biosynthesis via DXP pathway; isopentenyl diphosphate from 1-deoxy-D-xylulose 5-phosphate: step 3/6. Catalyzes the phosphorylation of the position 2 hydroxy group of 4-diphosphocytidyl-2C-methyl-D-erythritol. This is 4-diphosphocytidyl-2-C-methyl-D-erythritol kinase from Ehrlichia ruminantium (strain Gardel).